We begin with the raw amino-acid sequence, 865 residues long: DNA-directed RNA polymerase subunit Rpo1N (865 aa).

Positions 60, 63, 70, 73, 100, 103, 146, and 149 each coordinate Zn(2+). Mg(2+) is bound by residues Asp451, Asp453, and Asp455. Residues Glu500–Gly531 are disordered. Residues Arg515–Gly531 show a composition bias toward basic and acidic residues.

The protein belongs to the RNA polymerase beta' chain family. Part of the RNA polymerase complex. It depends on Mg(2+) as a cofactor. Zn(2+) serves as cofactor.

Its subcellular location is the cytoplasm. The catalysed reaction is RNA(n) + a ribonucleoside 5'-triphosphate = RNA(n+1) + diphosphate. In terms of biological role, DNA-dependent RNA polymerase (RNAP) catalyzes the transcription of DNA into RNA using the four ribonucleoside triphosphates as substrates. Forms the clamp head domain. The sequence is that of DNA-directed RNA polymerase subunit Rpo1N from Methanothermobacter thermautotrophicus (strain Winter) (Methanobacterium thermoautotrophicum).